Here is a 128-residue protein sequence, read N- to C-terminus: Fluoride-specific ion channel FluC (128 aa).

Helical transmembrane passes span 4–24, 39–59, 71–91, and 99–119; these read LLLALIVGLGGFLGASLRYLI, GTLIANILGALLIGFIMEFSM, FLTTGIMGGLTTFSTFSYETI, and MTLGIENIILNLGCSLLFVVI. Na(+)-binding residues include Gly78 and Thr81.

This sequence belongs to the fluoride channel Fluc/FEX (TC 1.A.43) family.

The protein localises to the cell membrane. The catalysed reaction is fluoride(in) = fluoride(out). Na(+) is not transported, but it plays an essential structural role and its presence is essential for fluoride channel function. Fluoride-specific ion channel. Important for reducing fluoride concentration in the cell, thus reducing its toxicity. This is Fluoride-specific ion channel FluC from Clostridium perfringens (strain 13 / Type A).